The chain runs to 293 residues: 3-hydroxybutyryl-CoA dehydrogenase (293 aa).

Belongs to the 3-hydroxyacyl-CoA dehydrogenase family.

The catalysed reaction is (3S)-3-hydroxybutanoyl-CoA + NADP(+) = acetoacetyl-CoA + NADPH + H(+). It functions in the pathway lipid metabolism; butanoate metabolism. The chain is 3-hydroxybutyryl-CoA dehydrogenase (hbdA) from Bradyrhizobium diazoefficiens (strain JCM 10833 / BCRC 13528 / IAM 13628 / NBRC 14792 / USDA 110).